The following is a 455-amino-acid chain: mRNA cleavage and polyadenylation factor CLP1 (455 aa).

ATP contacts are provided by Glu-28 and Lys-67. Residues 112-131 (EAAARNNGGGRSAPHGPRVL) are disordered. Position 137-142 (137-142 (GCGRTS)) interacts with ATP.

This sequence belongs to the Clp1 family. Clp1 subfamily. As to quaternary structure, component of a pre-mRNA cleavage factor complex. Interacts directly with PCF11.

The protein resides in the nucleus. In terms of biological role, required for endonucleolytic cleavage during polyadenylation-dependent pre-mRNA 3'-end formation. In Pyricularia oryzae (strain 70-15 / ATCC MYA-4617 / FGSC 8958) (Rice blast fungus), this protein is mRNA cleavage and polyadenylation factor CLP1.